The sequence spans 90 residues: Small ribosomal subunit protein uS15 (90 aa).

This sequence belongs to the universal ribosomal protein uS15 family. As to quaternary structure, part of the 30S ribosomal subunit. Forms a bridge to the 50S subunit in the 70S ribosome, contacting the 23S rRNA.

One of the primary rRNA binding proteins, it binds directly to 16S rRNA where it helps nucleate assembly of the platform of the 30S subunit by binding and bridging several RNA helices of the 16S rRNA. In terms of biological role, forms an intersubunit bridge (bridge B4) with the 23S rRNA of the 50S subunit in the ribosome. This chain is Small ribosomal subunit protein uS15, found in Campylobacter lari (strain RM2100 / D67 / ATCC BAA-1060).